A 71-amino-acid polypeptide reads, in one-letter code: MAFLKKSLFLVLFLGLVSLSICEEEKRENEMEQEDDEQSEMKRGLWSKIKDAAKTAGKAALGFVNEMVGEQ.

An N-terminal signal peptide occupies residues 1–22 (MAFLKKSLFLVLFLGLVSLSIC). The propeptide occupies 23–43 (EEEKRENEMEQEDDEQSEMKR). Residue Val68 is modified to Valine amide. Residues 69–71 (GEQ) constitute a propeptide that is removed on maturation.

It belongs to the frog skin active peptide (FSAP) family. Dermaseptin subfamily. Expressed by the skin glands.

The protein resides in the secreted. It is found in the target cell membrane. Its function is as follows. Antimicrobial peptide with activity against fungi, Gram-positive and Gram-negative bacteria. Is active against S.aureus (MIC=16 uM), MRSA (MIC=32 uM), E.faecalis (MIC=16 uM), E.coli (MIC=8 uM), P.aeruginosa (MIC=16 uM), K.pneumoniae (MIC=8 uM), and C.albicans (MIC=64 uM). Also inhibits biofilm formation. Acts by disrupting cell membranes. Also exhibits anti-proliferative effect against various human cancer cells. Shows weak hemolytic activity towards horse erythrocytes. This is Dermaseptin-PT9 from Phyllomedusa tarsius (Brownbelly leaf frog).